Here is a 301-residue protein sequence, read N- to C-terminus: N-acetylmuramic acid 6-phosphate etherase (301 aa).

Residues threonine 57–lysine 220 enclose the SIS domain. Glutamate 85 (proton donor) is an active-site residue. Glutamate 116 is a catalytic residue.

The protein belongs to the GCKR-like family. MurNAc-6-P etherase subfamily. In terms of assembly, homodimer.

It catalyses the reaction N-acetyl-D-muramate 6-phosphate + H2O = N-acetyl-D-glucosamine 6-phosphate + (R)-lactate. It functions in the pathway amino-sugar metabolism; N-acetylmuramate degradation. Its function is as follows. Specifically catalyzes the cleavage of the D-lactyl ether substituent of MurNAc 6-phosphate, producing GlcNAc 6-phosphate and D-lactate. The sequence is that of N-acetylmuramic acid 6-phosphate etherase from Clostridium botulinum (strain Eklund 17B / Type B).